A 1954-amino-acid polypeptide reads, in one-letter code: Chromodomain-helicase-DNA-binding protein 5 (1954 aa).

Disordered stretches follow at residues 1–134 and 225–338; these read MRGP…PKSS and PLAV…GDGY. 2 stretches are compositionally biased toward acidic residues: residues 17-37 and 72-90; these read EEMENEDEMSEEEDGGLEAFD and NDELSENEEDLEEKSESEG. Positions 96 to 115 are enriched in basic residues; the sequence is NKKKKKKLKDKKEKKAKRKK. Positions 227-237 are enriched in pro residues; the sequence is AVSPPQVPQPV. Residues 251–272 show a composition bias toward basic residues; it reads GVRKKIKGSKDGKKKGKGKKTA. Residues 291 to 301 are compositionally biased toward acidic residues; the sequence is SEEDEREESDF. The segment covering 321-330 has biased composition (basic residues); that stretch reads KKSKRRRKKK. 2 consecutive PHD-type zinc fingers follow at residues 343 to 390 and 416 to 463; these read QDYC…CEKE and MEFC…CTCP. The segment at 343–653 is histone-binding; that stretch reads QDYCEVCQQG…HRELMLGEDT (311 aa). Positions 497–554 constitute a Chromo 1 domain; it reads LPPPKPLEGIPEREFFVKWAGLSYWHCSWVKELQLELYHTVMYRNYQRKNDMDEPPPF. A disordered region spans residues 549–571; that stretch reads DEPPPFDYGSGDEDGKSEKRKNK. The segment covering 561 to 571 has biased composition (basic and acidic residues); the sequence is EDGKSEKRKNK. Positions 592–653 constitute a Chromo 2 domain; that stretch reads MMIHRILNHS…HRELMLGEDT (62 aa). A Helicase ATP-binding domain is found at 712 to 896; the sequence is RFSWAQGTDT…FHLLNFLTPE (185 aa). ATP is bound at residue 725–732; sequence DEMGLGKT. The DEAH box signature appears at 847 to 850; it reads DEAH. The region spanning 1028 to 1193 is the Helicase C-terminal domain; it reads LLQKMLKKLR…MTKQELDDIL (166 aa). Disordered stretches follow at residues 1209–1253, 1351–1411, 1524–1564, 1597–1640, and 1658–1696; these read MSQG…EDSS, YNDA…LPPL, YSTP…APLG, AALD…REEV, and SRGDSSELRPDDTKAEEKEPIETQQNGDKEEDDEGKKED. Acidic residues-rich tracts occupy residues 1355–1366 and 1376–1385; these read SQEDQEWQDELS and SEDEDEDFEE. Gln-1390 carries the post-translational modification N5-methylglutamine. Ser-1554 carries the post-translational modification Phosphoserine. The span at 1554–1564 shows a compositional bias: low complexity; that stretch reads SPAHLLPAPLG. Composition is skewed to basic and acidic residues over residues 1600–1627 and 1658–1678; these read DRVESEDKHESPASKERAREERPEETEK and SRGDSSELRPDDTKAEEKEPI.

This sequence belongs to the SNF2/RAD54 helicase family. Component of the nucleosome remodeling and deacetylase (NuRD) repressor complex, composed of core proteins MTA1, MTA2, MTA3, RBBP4, RBBP7, HDAC1, HDAC2, MBD2, MBD3, and peripherally associated proteins CDK2AP1, CDK2AP2, GATAD2A, GATAD2B, CHD3, CHD4 and CHD5. The exact stoichiometry of the NuRD complex is unknown, and some subunits such as MBD2 and MBD3, GATAD2A and GATAD2B, and CHD3, CHD4 and CHD5 define mutually exclusive NuRD complexes. Interacts with HDAC2. Methylated at Gln-1390 by N6AMT1. Preferentially expressed in total brain, fetal brain, and cerebellum. It is also moderately expressed in the adrenal gland and detected in testis.

The protein localises to the nucleus. It is found in the chromosome. It carries out the reaction ATP + H2O = ADP + phosphate + H(+). Functionally, ATP-dependent chromatin-remodeling factor that binds DNA through histones and regulates gene transcription. May specifically recognize and bind trimethylated 'Lys-27' (H3K27me3) and non-methylated 'Lys-4' of histone H3. Acts as a component of the histone deacetylase NuRD complex which participates in the remodeling of chromatin. Plays a role in the development of the nervous system by activating the expression of genes promoting neuron terminal differentiation. In parallel, it may also positively regulate the trimethylation of histone H3 at 'Lys-27' thereby specifically repressing genes that promote the differentiation into non-neuronal cell lineages. Regulates the expression of genes involved in cell proliferation and differentiation. Downstream activated genes may include CDKN2A that positively regulates the p53/TP53 pathway, which in turn, prevents cell proliferation. In spermatogenesis, it probably regulates histone hyperacetylation and the replacement of histones by transition proteins in chromatin, a crucial step in the condensation of spermatid chromatin and the production of functional spermatozoa. The chain is Chromodomain-helicase-DNA-binding protein 5 from Homo sapiens (Human).